Reading from the N-terminus, the 1546-residue chain is Mediator of RNA polymerase II transcription subunit 14 (1546 aa).

2 short sequence motifs (LXXLL motif) span residues 51–55 (LAELL) and 468–472 (LPSLL). Disordered regions lie at residues 692-717 (KSATAAGQQPQQGAASAAGTAPPSGS), 1000-1193 (GRAP…NRPW), and 1512-1546 (NPMMPMQQLQPQVGPQGQVGPGGYPQLGPNPGGPQ). 3 stretches are compositionally biased toward low complexity: residues 693 to 717 (SATAAGQQPQQGAASAAGTAPPSGS), 1020 to 1035 (GGPSSVTGVSAGGSSP), and 1061 to 1075 (PSSSNPHTPASPHPS). A compositionally biased stretch (pro residues) spans 1093 to 1102 (PPAPHMPHPS). The span at 1125–1149 (GPNTLYMQSHQDSPFTAMSPANNQW) shows a compositional bias: polar residues. Residues 1153–1163 (PSMPRPSPRPG) show a composition bias toward pro residues. The segment covering 1515 to 1527 (MPMQQLQPQVGPQ) has biased composition (low complexity).

It belongs to the Mediator complex subunit 14 family. Component of the Mediator complex.

The protein localises to the nucleus. Its function is as follows. Component of the Mediator complex, a coactivator involved in the regulated transcription of nearly all RNA polymerase II-dependent genes. Mediator functions as a bridge to convey information from gene-specific regulatory proteins to the basal RNA polymerase II transcription machinery. Mediator is recruited to promoters by direct interactions with regulatory proteins and serves as a scaffold for the assembly of a functional preinitiation complex with RNA polymerase II and the general transcription factors. This Drosophila pseudoobscura pseudoobscura (Fruit fly) protein is Mediator of RNA polymerase II transcription subunit 14 (MED14).